Consider the following 132-residue polypeptide: Pro-MCH 1 (132 aa).

The first 24 residues, 1 to 24, serve as a signal peptide directing secretion; sequence MRDSVLSVIFALALFLECYTPSMA. The cysteines at positions 120 and 129 are disulfide-linked.

Belongs to the MCH family. As to expression, pituitary gland. Produced in neurons of lateral basal hypothalamus which project both to the brain and to the neural lobe of the pituitary gland from where MCH is released.

Functionally, plays a role in skin pigmentation by antagonizing the action of melanotropin alpha. Induces melanin concentration within the melanophores. May participate in the control of the hypothalamo-pituitary adrenal gland axis by inhibiting the release of ACTH. This is Pro-MCH 1 (mch1) from Oncorhynchus kisutch (Coho salmon).